The chain runs to 109 residues: Nucleoid-associated protein SO_2014 (109 aa).

This sequence belongs to the YbaB/EbfC family. In terms of assembly, homodimer.

Its subcellular location is the cytoplasm. The protein localises to the nucleoid. In terms of biological role, binds to DNA and alters its conformation. May be involved in regulation of gene expression, nucleoid organization and DNA protection. The sequence is that of Nucleoid-associated protein SO_2014 from Shewanella oneidensis (strain ATCC 700550 / JCM 31522 / CIP 106686 / LMG 19005 / NCIMB 14063 / MR-1).